The primary structure comprises 196 residues: UPF0134 protein MPN_501 (196 aa).

Belongs to the UPF0134 family.

This Mycoplasma pneumoniae (strain ATCC 29342 / M129 / Subtype 1) (Mycoplasmoides pneumoniae) protein is UPF0134 protein MPN_501.